Reading from the N-terminus, the 354-residue chain is Guanine nucleotide-binding protein G(i) subunit alpha-1 (354 aa).

Residue glycine 2 is the site of N-myristoyl glycine attachment. Cysteine 3 is lipidated: S-palmitoyl cysteine. Positions 32 to 354 (REVKLLLLGA…KNNLKDCGLF (323 aa)) constitute a G-alpha domain. The interval 35-48 (KLLLLGAGESGKST) is G1 motif. GTP contacts are provided by residues 43-48 (ESGKST), 150-151 (DS), and 175-178 (LRTR). A Mg(2+)-binding site is contributed by serine 47. The tract at residues 173–181 (DVLRTRVKT) is G2 motif. Threonine 181 provides a ligand contact to Mg(2+). The G3 motif stretch occupies residues 196–205 (FKMFDVGGQR). GTP contacts are provided by residues 200–204 (DVGGQ), 269–272 (NKKD), and alanine 326. Positions 265–272 (ILFLNKKD) are G4 motif. Residues 324–329 (TCATDT) are G5 motif.

This sequence belongs to the G-alpha family. G(i/o/t/z) subfamily. Heterotrimeric G proteins are composed of 3 units; alpha, beta and gamma. The alpha chain contains the guanine nucleotide binding site. Part of a spindle orientation complex at least composed of GNAI1, GPSM2 and NUMA1. Identified in complex with the beta subunit GNB1 and the gamma subunit GNG1. Identified in complex with the beta subunit GNB1 and the gamma subunit GNG2. Component of the TAS2R14-GNAI1 complex, consisting of TAS2R14, GNAI1, GNB1 and GNG2; within the complex interacts with TAS2R14; this complex plays a role in the perception of bitterness. GTP binding causes dissociation of the heterotrimer, liberating the individual subunits so that they can interact with downstream effector proteins. Interacts (GDP-bound form) with GPSM1; this inhibits guanine nucleotide exchange and GTP binding. Interacts (GDP-bound form) with GPSM2 (via GoLoco domains); this inhibits guanine nucleotide exchange. Interacts with RGS10; this strongly enhances GTP hydrolysis. Interacts with RGS1 and RGS16; this strongly enhances GTPase activity. Interacts with RGS4. Interacts with RGS12. Interacts (via active GTP- or inactive GDP-bound forms) with RGS14 (via RGS and GoLoco domains). Interacts with RGS3, RGS6, RGS7, RGS8, RGS17, RGS18 and RGS20 (in vitro). Interacts (GDP-bound form) with RIC8A (via C-terminus); promoting GNAI1 folding and association with the plasma membrane. Interacts (inactive GDP-bound form) with NUCB1 (via GBA motif); the interaction leads to activation of GNAI1. Interacts (inactive GDP-bound form) with CCDC88C/DAPLE (via GBA motif); the interaction leads to activation of GNAI1. Interacts (inactive GDP-bound form) with CCDC8A/GIV (via GBA motif). Interacts with GPR15. In terms of processing, myristoylation at Gly-2 is required for membrane anchoring before palmitoylation. Palmitoylation at Cys-3 varies with membrane lipid composition.

The protein resides in the nucleus. Its subcellular location is the cytoplasm. The protein localises to the cell membrane. It is found in the cytoskeleton. It localises to the microtubule organizing center. The protein resides in the centrosome. Its subcellular location is the cell cortex. The protein localises to the membrane. Its function is as follows. Guanine nucleotide-binding proteins (G proteins) function as transducers downstream of G protein-coupled receptors (GPCRs) in numerous signaling cascades. The alpha chain contains the guanine nucleotide binding site and alternates between an active, GTP-bound state and an inactive, GDP-bound state. Signaling by an activated GPCR promotes GDP release and GTP binding. The alpha subunit has a low GTPase activity that converts bound GTP to GDP, thereby terminating the signal. Both GDP release and GTP hydrolysis are modulated by numerous regulatory proteins. Signaling is mediated via effector proteins, such as adenylate cyclase. Inhibits adenylate cyclase activity of ADCY1, ADCY5 and ADCY6, leading to decreased intracellular cAMP levels. The inactive GDP-bound form prevents the association of RGS14 with centrosomes and is required for the translocation of RGS14 from the cytoplasm to the plasma membrane. Required for normal cytokinesis during mitosis. Required for cortical dynein-dynactin complex recruitment during metaphase. The sequence is that of Guanine nucleotide-binding protein G(i) subunit alpha-1 (GNAI1) from Pongo abelii (Sumatran orangutan).